An 82-amino-acid chain; its full sequence is DNA-directed RNA polymerase subunit Rpo5 (82 aa).

It belongs to the archaeal Rpo5/eukaryotic RPB5 RNA polymerase subunit family. As to quaternary structure, part of the RNA polymerase complex.

Its subcellular location is the cytoplasm. It catalyses the reaction RNA(n) + a ribonucleoside 5'-triphosphate = RNA(n+1) + diphosphate. In terms of biological role, DNA-dependent RNA polymerase (RNAP) catalyzes the transcription of DNA into RNA using the four ribonucleoside triphosphates as substrates. The protein is DNA-directed RNA polymerase subunit Rpo5 of Pyrococcus horikoshii (strain ATCC 700860 / DSM 12428 / JCM 9974 / NBRC 100139 / OT-3).